The sequence spans 327 residues: Diacylglycerol acyltransferase/mycolyltransferase Ag85B (327 aa).

An N-terminal signal peptide occupies residues 1–38 (MIDVSGKIRAWGRWLLVGAAATLPSLISLAGGAATASA). A substrate-binding site is contributed by 80–81 (LR). The tract at residues 96–106 (FEWYYQSGLSV) is fibronectin-binding. Cysteine 125 and cysteine 130 are oxidised to a cystine. Residues serine 164 and aspartate 192 each coordinate substrate. Serine 164 acts as the Nucleophile in catalysis. Glutamate 268 is a catalytic residue. Residues 270–273 (FVHG), lysine 277, and 300–302 (HSW) contribute to the substrate site. Residue histidine 300 is part of the active site.

It belongs to the mycobacterial A85 antigen family.

The protein resides in the secreted. It catalyses the reaction 2 alpha,alpha'-trehalose 6-mycolate = alpha,alpha'-trehalose 6,6'-bismycolate + alpha,alpha-trehalose. It carries out the reaction an acyl-CoA + a 1,2-diacyl-sn-glycerol = a triacyl-sn-glycerol + CoA. In terms of biological role, the antigen 85 proteins (FbpA, FbpB, FbpC) are responsible for the high affinity of mycobacteria for fibronectin, a large adhesive glycoprotein, which facilitates the attachment of M.tuberculosis to murine alveolar macrophages (AMs). They also help to maintain the integrity of the cell wall by catalyzing the transfer of mycolic acids to cell wall arabinogalactan and through the synthesis of alpha,alpha-trehalose dimycolate (TDM, cord factor). They catalyze the transfer of a mycoloyl residue from one molecule of alpha,alpha-trehalose monomycolate (TMM) to another TMM, leading to the formation of TDM. The polypeptide is Diacylglycerol acyltransferase/mycolyltransferase Ag85B (fbpB) (Mycobacterium leprae (strain TN)).